Consider the following 338-residue polypeptide: Glyceraldehyde-3-phosphate dehydrogenase, cytosolic (338 aa).

NAD(+) contacts are provided by residues 14-15, Asp36, and Arg83; that span reads RI. D-glyceraldehyde 3-phosphate is bound by residues 154–156, Thr185, 214–215, and Arg237; these read SCT and TG. The Nucleophile role is filled by Cys155. Position 319 (Asn319) interacts with NAD(+).

This sequence belongs to the glyceraldehyde-3-phosphate dehydrogenase family. In terms of assembly, homotetramer.

Its subcellular location is the cytoplasm. It catalyses the reaction D-glyceraldehyde 3-phosphate + phosphate + NAD(+) = (2R)-3-phospho-glyceroyl phosphate + NADH + H(+). It participates in carbohydrate degradation; glycolysis; pyruvate from D-glyceraldehyde 3-phosphate: step 1/5. Its function is as follows. Key enzyme in glycolysis that catalyzes the first step of the pathway by converting D-glyceraldehyde 3-phosphate (G3P) into 3-phospho-D-glyceroyl phosphate. Essential for the maintenance of cellular ATP levels and carbohydrate metabolism. The protein is Glyceraldehyde-3-phosphate dehydrogenase, cytosolic (GAPC1) of Pisum sativum (Garden pea).